Reading from the N-terminus, the 426-residue chain is D-tagatose-1,6-bisphosphate aldolase subunit KbaZ (426 aa).

This sequence belongs to the GatZ/KbaZ family. KbaZ subfamily. In terms of assembly, forms a complex with KbaY.

It participates in carbohydrate metabolism; D-tagatose 6-phosphate degradation; D-glyceraldehyde 3-phosphate and glycerone phosphate from D-tagatose 6-phosphate: step 2/2. Component of the tagatose-1,6-bisphosphate aldolase KbaYZ that is required for full activity and stability of the Y subunit. Could have a chaperone-like function for the proper and stable folding of KbaY. When expressed alone, KbaZ does not show any aldolase activity. In Escherichia fergusonii (strain ATCC 35469 / DSM 13698 / CCUG 18766 / IAM 14443 / JCM 21226 / LMG 7866 / NBRC 102419 / NCTC 12128 / CDC 0568-73), this protein is D-tagatose-1,6-bisphosphate aldolase subunit KbaZ.